We begin with the raw amino-acid sequence, 446 residues long: Glucose-6-phosphate isomerase (446 aa).

Catalysis depends on Glu-288, which acts as the Proton donor. Active-site residues include His-309 and Lys-423.

It belongs to the GPI family.

Its subcellular location is the cytoplasm. The enzyme catalyses alpha-D-glucose 6-phosphate = beta-D-fructose 6-phosphate. Its pathway is carbohydrate biosynthesis; gluconeogenesis. It functions in the pathway carbohydrate degradation; glycolysis; D-glyceraldehyde 3-phosphate and glycerone phosphate from D-glucose: step 2/4. Its function is as follows. Catalyzes the reversible isomerization of glucose-6-phosphate to fructose-6-phosphate. The protein is Glucose-6-phosphate isomerase of Lactobacillus delbrueckii subsp. bulgaricus (strain ATCC 11842 / DSM 20081 / BCRC 10696 / JCM 1002 / NBRC 13953 / NCIMB 11778 / NCTC 12712 / WDCM 00102 / Lb 14).